A 335-amino-acid chain; its full sequence is MKHLLSTENLSLFDAVRVLDTAEEMSAVGEREVKKLPALRGRTVVNLFFEDSTRTRISFEAAAKRLSADVINFAAKGSSVSKGESLKDTAQTLAAMGADAVVIRHWASGAPHRLAATDWIDAAVINAGDGTHEHPTQALLDAFTMRRHWSQVNGTESTGADLKGMRVAIAGDVLHSRVARSNVWLLKTLGAEVTLVAPPTLLPIGVEHWPCKVSYNLDETLEAGIDAMMMLRVQGERMNASFFPSTREYSRRWGFDDARLRMLDDLGMKDTIIMHPGPMNRGLEISSAAADSPRSTVLAQVRNGVSVRMAALYLLLSGDSREAAPNVSQSSKETN.

Arg-54 and Thr-55 together coordinate carbamoyl phosphate. Lys-82 is an L-aspartate binding site. Positions 104, 134, and 137 each coordinate carbamoyl phosphate. L-aspartate contacts are provided by Arg-177 and Arg-232. Residues Gly-277 and Pro-278 each contribute to the carbamoyl phosphate site.

This sequence belongs to the aspartate/ornithine carbamoyltransferase superfamily. ATCase family. In terms of assembly, heterododecamer (2C3:3R2) of six catalytic PyrB chains organized as two trimers (C3), and six regulatory PyrI chains organized as three dimers (R2).

It carries out the reaction carbamoyl phosphate + L-aspartate = N-carbamoyl-L-aspartate + phosphate + H(+). Its pathway is pyrimidine metabolism; UMP biosynthesis via de novo pathway; (S)-dihydroorotate from bicarbonate: step 2/3. Functionally, catalyzes the condensation of carbamoyl phosphate and aspartate to form carbamoyl aspartate and inorganic phosphate, the committed step in the de novo pyrimidine nucleotide biosynthesis pathway. The polypeptide is Aspartate carbamoyltransferase catalytic subunit (Paenarthrobacter aurescens (strain TC1)).